A 202-amino-acid chain; its full sequence is Orotate phosphoribosyltransferase (202 aa).

5-phospho-alpha-D-ribose 1-diphosphate contacts are provided by residues Lys93 and 113 to 121; that span reads EDIITTGGS. Orotate-binding residues include Thr117 and Arg145.

Belongs to the purine/pyrimidine phosphoribosyltransferase family. PyrE subfamily. As to quaternary structure, homodimer. It depends on Mg(2+) as a cofactor.

The catalysed reaction is orotidine 5'-phosphate + diphosphate = orotate + 5-phospho-alpha-D-ribose 1-diphosphate. The protein operates within pyrimidine metabolism; UMP biosynthesis via de novo pathway; UMP from orotate: step 1/2. Its function is as follows. Catalyzes the transfer of a ribosyl phosphate group from 5-phosphoribose 1-diphosphate to orotate, leading to the formation of orotidine monophosphate (OMP). This is Orotate phosphoribosyltransferase from Campylobacter jejuni subsp. jejuni serotype O:2 (strain ATCC 700819 / NCTC 11168).